Here is a 406-residue protein sequence, read N- to C-terminus: Peptidase T (406 aa).

Histidine 78 contacts Zn(2+). Aspartate 80 is an active-site residue. Residue aspartate 139 coordinates Zn(2+). The Proton acceptor role is filled by glutamate 173. The Zn(2+) site is built by glutamate 174, aspartate 196, and histidine 378.

This sequence belongs to the peptidase M20B family. Requires Zn(2+) as cofactor.

Its subcellular location is the cytoplasm. It catalyses the reaction Release of the N-terminal residue from a tripeptide.. In terms of biological role, cleaves the N-terminal amino acid of tripeptides. In Clostridium perfringens (strain ATCC 13124 / DSM 756 / JCM 1290 / NCIMB 6125 / NCTC 8237 / Type A), this protein is Peptidase T.